We begin with the raw amino-acid sequence, 123 residues long: Histone H2B (123 aa).

Residues Met-1–Arg-32 are disordered. Residues Gly-9–Ala-18 show a composition bias toward basic residues. An O-linked (GlcNAc) serine glycan is attached at Ser-110. Lys-118 is covalently cross-linked (Glycyl lysine isopeptide (Lys-Gly) (interchain with G-Cter in ubiquitin)).

It belongs to the histone H2B family. The nucleosome is a histone octamer containing two molecules each of H2A, H2B, H3 and H4 assembled in one H3-H4 heterotetramer and two H2A-H2B heterodimers. The octamer wraps approximately 147 bp of DNA. Post-translationally, monoubiquitination of Lys-118 gives a specific tag for epigenetic transcriptional activation and is also prerequisite for histone H3 'Lys-4' and 'Lys-79' methylation. In terms of processing, glcNAcylation at Ser-110 promotes monoubiquitination of Lys-118. It fluctuates in response to extracellular glucose, and associates with transcribed genes.

The protein resides in the nucleus. It localises to the chromosome. Functionally, core component of nucleosome. Nucleosomes wrap and compact DNA into chromatin, limiting DNA accessibility to the cellular machineries which require DNA as a template. Histones thereby play a central role in transcription regulation, DNA repair, DNA replication and chromosomal stability. DNA accessibility is regulated via a complex set of post-translational modifications of histones, also called histone code, and nucleosome remodeling. This chain is Histone H2B, found in Holothuria tubulosa (Tubular sea cucumber).